Reading from the N-terminus, the 1407-residue chain is MKDLLKFLKAQTKTEEFDAIKIALASPDMIRSWSFGEVKKPETINYRTFKPERDGLFCARIFGPVKDYECLCGKYKRLKHRGVICEKCGVEVTQTKVRRERMGHIELASPTAHIWFLKSLPSRIGLLLDMPLRDIERVLYFESYVVIEGGMTNLERQQILTEEQYLDALEEFGDEFDAKMGAEAIQALLKSMDLEQECETLREELNETNSETKRKKLTKRIKLLEAFVQSGNKPEWMILTVLPVLPPDLRPLVPLDGGRFATSDLNDLYRRVINRNNRLKRLLDLAAPDIIVRNEKRMLQEAVDALLDNGRRGRAITGSNKRPLKSLADMIKGKQGRFRQNLLGKRVDYSGRSVITVGPYLRLHQCGLPKKMALELFKPFIYGKLELRGLATTIKAAKKMVEREEAVVWDILDEVIREHPVLLNRAPTLHRLGIQAFEPVLIEGKAIQLHPLVCAAYNADFDGDQMAVHVPLTLEAQLEARALMMSTNNILSPANGEPIIVPSQDVVLGLYYMTRDCVNAKGEGMVLTGPKEAERIYRAGLASLHARVKVRITEYEKDENGEFVATTSLKDTTVGRAILWMIVPKGLPFSIVNQALGKKAISKMLNTCYRILGLKPTVIFADQTMYTGFAYAARSGASVGIDDMVIPEKKHEIISEAEAEVAEIQEQFQSGLVTAGERYNKVIDIWAAANDRVSKAMMDNLQTETVINRDGQEEQQVSFNSIYMMADSGARGSAAQIRQLAGMRGLMAKPDGSIIETPITANFREGLNVLQYFISTHGARKGLADTALKTANSGYLTRRLVDVAQDLVVTEDDCGTHEGILMTPVIEGGDVKEPLRDRVLGRVTAEDVLKPGTADILVPRNTLLHEQWCDLLEANSVDAVKVRSVVSCDTDFGVCAHCYGRDLARGHIINKGEAIGVIAAQSIGEPGTQLTMRTFHIGGAASRAAAESSIQVKNKGSIKLSNVKSVVNSSGKLVITSRNTELKLLDEFGRTKESYKVPYGAVMAKGDGEQVAGGETVANWDPHTMPVITEVSGFIRFTDMIDGQTITRQTDELTGLSSLVVLDSAERTTGGKDLRPALKIVDAQGNDVLIPGTDMPAQYFLPGKAIVQLEDGVQISSGDTLARIPQESGGTKDITGGLPRVADLFEARRPKEPAILAEIAGIVSFGKETKGKRRLVITPVDGSDPYEEMIPKWRQLNVFEGERVERGDVISDGPEAPHDILRLRGVHAVTRYIVNEVQDVYRLQGVKINDKHIEVIVRQMLRKATIESAGSSDFLEGEQVEYSRVKIANRELEANGKVGATFSRDLLGITKASLATESFISAASFQETTRVLTEAAVAGKRDELRGLKENVIVGRLIPAGTGYAYHQDRMRRRAAGEQPATPQVTAEDASASLAELLNAGLGGSDNE.

The Zn(2+) site is built by Cys-70, Cys-72, Cys-85, and Cys-88. Asp-460, Asp-462, and Asp-464 together coordinate Mg(2+). 4 residues coordinate Zn(2+): Cys-814, Cys-888, Cys-895, and Cys-898.

It belongs to the RNA polymerase beta' chain family. In terms of assembly, the RNAP catalytic core consists of 2 alpha, 1 beta, 1 beta' and 1 omega subunit. When a sigma factor is associated with the core the holoenzyme is formed, which can initiate transcription. Mg(2+) is required as a cofactor. Requires Zn(2+) as cofactor.

It catalyses the reaction RNA(n) + a ribonucleoside 5'-triphosphate = RNA(n+1) + diphosphate. In terms of biological role, DNA-dependent RNA polymerase catalyzes the transcription of DNA into RNA using the four ribonucleoside triphosphates as substrates. This chain is DNA-directed RNA polymerase subunit beta', found in Salmonella arizonae (strain ATCC BAA-731 / CDC346-86 / RSK2980).